A 156-amino-acid chain; its full sequence is Histone acetyltransferase HPA2 (156 aa).

Residues 9–156 (ITVRFVTEND…PKILYKRKGY (148 aa)) form the N-acetyltransferase domain. Residue 93-106 (LYVDENSRVKGAGG) participates in acetyl-CoA binding.

This sequence belongs to the acetyltransferase family. GNAT subfamily. As to quaternary structure, forms homodimers in the absence, and homotetramers in the presence of acetyl-CoA. In terms of processing, autoacetylates in an intermolecular reaction.

It catalyses the reaction L-lysyl-[protein] + acetyl-CoA = N(6)-acetyl-L-lysyl-[protein] + CoA + H(+). Its function is as follows. N-acetyltransferase that acetylates histone H3 at 'Lys-14' and histone H4 at 'Lys-5' and 'Lys-12'. Also acetylates polyamines like putrescine, spermidine and spermine, and certain other small basic proteins like nuclear HMG proteins. The polypeptide is Histone acetyltransferase HPA2 (Saccharomyces cerevisiae (strain ATCC 204508 / S288c) (Baker's yeast)).